A 143-amino-acid polypeptide reads, in one-letter code: MELNTIQPADGAKHYKRRVGRGIGSGLGKTAGRGHKGQKSRSGGFHKVGFEGGQMPLQRRLPKRGFKSLATPYKAEVRLSDLEALPVTEIDILALKQAGVIGELARVVRVILSGELTKKVTLKGLIATKGAKAAIEAAGGSVA.

The disordered stretch occupies residues 1 to 52 (MELNTIQPADGAKHYKRRVGRGIGSGLGKTAGRGHKGQKSRSGGFHKVGFEG). Gly residues predominate over residues 21–31 (RGIGSGLGKTA).

This sequence belongs to the universal ribosomal protein uL15 family. Part of the 50S ribosomal subunit.

Its function is as follows. Binds to the 23S rRNA. In Herminiimonas arsenicoxydans, this protein is Large ribosomal subunit protein uL15.